A 328-amino-acid polypeptide reads, in one-letter code: Tetraacyldisaccharide 4'-kinase (328 aa).

Thr-55 to Thr-62 serves as a coordination point for ATP.

The protein belongs to the LpxK family.

The enzyme catalyses a lipid A disaccharide + ATP = a lipid IVA + ADP + H(+). It functions in the pathway glycolipid biosynthesis; lipid IV(A) biosynthesis; lipid IV(A) from (3R)-3-hydroxytetradecanoyl-[acyl-carrier-protein] and UDP-N-acetyl-alpha-D-glucosamine: step 6/6. In terms of biological role, transfers the gamma-phosphate of ATP to the 4'-position of a tetraacyldisaccharide 1-phosphate intermediate (termed DS-1-P) to form tetraacyldisaccharide 1,4'-bis-phosphate (lipid IVA). This chain is Tetraacyldisaccharide 4'-kinase, found in Escherichia coli O6:K15:H31 (strain 536 / UPEC).